Consider the following 315-residue polypeptide: Probable cell division protein WhiA (315 aa).

Residues 274 to 308 (SLKNLGELIPGGPISKSGINHRLRKLNEIAEKIRA) constitute a DNA-binding region (H-T-H motif).

This sequence belongs to the WhiA family.

Involved in cell division and chromosome segregation. This chain is Probable cell division protein WhiA, found in Ligilactobacillus salivarius (strain UCC118) (Lactobacillus salivarius).